A 427-amino-acid chain; its full sequence is 3-phosphoshikimate 1-carboxyvinyltransferase (427 aa).

3-phosphoshikimate-binding residues include lysine 22, serine 23, and arginine 27. A phosphoenolpyruvate-binding site is contributed by lysine 22. Positions 96 and 124 each coordinate phosphoenolpyruvate. 3-phosphoshikimate is bound by residues serine 170, serine 171, glutamine 172, serine 198, aspartate 313, asparagine 336, and lysine 340. Glutamine 172 contributes to the phosphoenolpyruvate binding site. Aspartate 313 (proton acceptor) is an active-site residue. Phosphoenolpyruvate is bound by residues arginine 344, arginine 386, and lysine 411.

This sequence belongs to the EPSP synthase family. As to quaternary structure, monomer.

The protein localises to the cytoplasm. The catalysed reaction is 3-phosphoshikimate + phosphoenolpyruvate = 5-O-(1-carboxyvinyl)-3-phosphoshikimate + phosphate. The protein operates within metabolic intermediate biosynthesis; chorismate biosynthesis; chorismate from D-erythrose 4-phosphate and phosphoenolpyruvate: step 6/7. In terms of biological role, catalyzes the transfer of the enolpyruvyl moiety of phosphoenolpyruvate (PEP) to the 5-hydroxyl of shikimate-3-phosphate (S3P) to produce enolpyruvyl shikimate-3-phosphate and inorganic phosphate. The polypeptide is 3-phosphoshikimate 1-carboxyvinyltransferase (Aeromonas salmonicida (strain A449)).